Here is a 36-residue protein sequence, read N- to C-terminus: Trypsin inhibitor 2 (36 aa).

3 disulfides stabilise this stretch: Cys-3/Cys-20, Cys-10/Cys-24, and Cys-19/Cys-35.

Its function is as follows. Trypsin inhibitor. This is Trypsin inhibitor 2 from Spinacia oleracea (Spinach).